A 294-amino-acid polypeptide reads, in one-letter code: Segregation and condensation protein A (294 aa).

This sequence belongs to the ScpA family. As to quaternary structure, component of a cohesin-like complex composed of ScpA, ScpB and the Smc homodimer, in which ScpA and ScpB bind to the head domain of Smc. The presence of the three proteins is required for the association of the complex with DNA.

The protein localises to the cytoplasm. In terms of biological role, participates in chromosomal partition during cell division. May act via the formation of a condensin-like complex containing Smc and ScpB that pull DNA away from mid-cell into both cell halves. This is Segregation and condensation protein A from Ureaplasma parvum serovar 3 (strain ATCC 700970).